The chain runs to 270 residues: UPF0354 protein BCA_4815 (270 aa).

This sequence belongs to the UPF0354 family.

The sequence is that of UPF0354 protein BCA_4815 from Bacillus cereus (strain 03BB102).